The sequence spans 64 residues: Beta-defensin 2 (64 aa).

An N-terminal signal peptide occupies residues 1–22 (MRLHHLLLVLFFVVLSAGSGFT). 3 disulfide bridges follow: Cys31–Cys60, Cys38–Cys53, and Cys43–Cys61.

The protein belongs to the beta-defensin family.

It is found in the secreted. In terms of biological role, has bactericidal activity. This is Beta-defensin 2 (DEFB2) from Ovis aries (Sheep).